Consider the following 451-residue polypeptide: UDP-N-acetylmuramoylalanine--D-glutamate ligase (451 aa).

An ATP-binding site is contributed by 120–126; it reads GSNGKTT.

This sequence belongs to the MurCDEF family.

It localises to the cytoplasm. The catalysed reaction is UDP-N-acetyl-alpha-D-muramoyl-L-alanine + D-glutamate + ATP = UDP-N-acetyl-alpha-D-muramoyl-L-alanyl-D-glutamate + ADP + phosphate + H(+). It participates in cell wall biogenesis; peptidoglycan biosynthesis. Its function is as follows. Cell wall formation. Catalyzes the addition of glutamate to the nucleotide precursor UDP-N-acetylmuramoyl-L-alanine (UMA). The sequence is that of UDP-N-acetylmuramoylalanine--D-glutamate ligase (murD) from Bacillus subtilis (strain 168).